The sequence spans 1101 residues: Isoleucine--tRNA ligase (1101 aa).

Residues 50–60 (PFANGLPHYGH) carry the 'HIGH' region motif. The 'KMSKS' region signature appears at 629-633 (KLSKR). Residue K632 participates in ATP binding.

The protein belongs to the class-I aminoacyl-tRNA synthetase family. IleS type 2 subfamily. Monomer. Zn(2+) is required as a cofactor.

The protein resides in the cytoplasm. The catalysed reaction is tRNA(Ile) + L-isoleucine + ATP = L-isoleucyl-tRNA(Ile) + AMP + diphosphate. In terms of biological role, catalyzes the attachment of isoleucine to tRNA(Ile). As IleRS can inadvertently accommodate and process structurally similar amino acids such as valine, to avoid such errors it has two additional distinct tRNA(Ile)-dependent editing activities. One activity is designated as 'pretransfer' editing and involves the hydrolysis of activated Val-AMP. The other activity is designated 'posttransfer' editing and involves deacylation of mischarged Val-tRNA(Ile). In Anaplasma marginale (strain St. Maries), this protein is Isoleucine--tRNA ligase.